The sequence spans 718 residues: SANT and BTB domain regulator of class switch recombination (718 aa).

The 39-residue stretch at 21–59 (DMILYPLIGIPQTINWETVARLVPGLTPKECVKRFDELK) folds into the SANT domain. Positions 147–255 (MVIHVCDEAK…QCIQYCHKNM (109 aa)) constitute a BTB domain. A compositionally biased stretch (acidic residues) spans 555-576 (SEEEEYTTGSEVTEDEVGDEEE). Disordered stretches follow at residues 555–622 (SEEE…SPFV) and 690–718 (RASV…GRPA). A compositionally biased stretch (basic residues) spans 580 to 595 (KQRKKEKPKKFTKPPK). The span at 604 to 615 (QKKEKTLEKSTS) shows a compositional bias: basic and acidic residues.

It belongs to the KIAA1841 family. As to quaternary structure, homodimer. Interacts (via the BTB domain) with HDAC1 and NCOR2.

In terms of biological role, negatively regulates class switch recombination or isotype switching in splenic B-cells. The chain is SANT and BTB domain regulator of class switch recombination from Mus musculus (Mouse).